A 290-amino-acid chain; its full sequence is Tubulin polyglutamylase complex subunit 1 (290 aa).

The interval 1–30 is disordered; it reads MAAVEKRRQAVPPPAGFTDSGRQSVSRAAG. Phosphoserine occurs at positions 34 and 266.

In terms of assembly, part of the neuronal tubulin polyglutamylase complex which contains TPGS1, TPGS2, TTLL1, LRRC49 and NICN1. Interacts with PCM1, CSTPP1 and LRRC49.

It localises to the cytoplasm. It is found in the cytoskeleton. Its subcellular location is the cilium axoneme. The protein resides in the flagellum axoneme. The protein localises to the cilium basal body. It localises to the flagellum basal body. It is found in the cell projection. Its subcellular location is the axon. The protein resides in the dendrite. The protein localises to the microtubule organizing center. It localises to the centrosome. It is found in the centriolar satellite. Functionally, subunit of the tubulin polyglutamylase complex (TPGC). The complex mediates cilia and flagella polyglutamylation which is essential for their biogenesis and motility. May act in the targeting of the tubulin polyglutamylase complex. Required for the development of the spermatid flagellum. The protein is Tubulin polyglutamylase complex subunit 1 of Homo sapiens (Human).